Consider the following 338-residue polypeptide: MSARSIHIVDTTLRDGSHAVSHQFTAEQIAAIAGGLDAAGVEYIEVSHGDGLAGSSYNYGWAALGDEEMLKAASAAIKKGKLTVLLLPGIGTVEDLKMAADCGAKVVRVATHVTEADIGEQHIGMAKKLGMMAVGFLMMCHMAPPEKVVEQAKLFESYGADYINIADSAGAMLPEDVKARVGAVVEAVKVPVGFHAHNNLTMATANALAAVEAGATFLDGACRGLGAGAGNAQTEALVGVLDKLGYRTGVDFYKVMDVAEDIVEPIMHRPQVVRNAPLMLGYAGVYSSFLLHTYRAAEKFNLDPRDILVELGRRRMVGGQEDMIVDVAYQLAQKRGGN.

The 251-residue stretch at 6–256 (IHIVDTTLRD…RTGVDFYKVM (251 aa)) folds into the Pyruvate carboxyltransferase domain. 14–15 (RD) contributes to the substrate binding site. Residue Asp-15 coordinates Mn(2+). His-18 (proton acceptor) is an active-site residue. Substrate is bound by residues Ser-168 and His-195. Mn(2+)-binding residues include His-195 and His-197. Tyr-286 serves as a coordination point for substrate.

Belongs to the 4-hydroxy-2-oxovalerate aldolase family.

It catalyses the reaction (S)-4-hydroxy-2-oxopentanoate = acetaldehyde + pyruvate. This Moorella thermoacetica (strain ATCC 39073 / JCM 9320) protein is 4-hydroxy-2-oxovalerate aldolase.